The following is a 417-amino-acid chain: MKETIYKQLEKVREASRKLCTLSDSDINSLLNDLANRIPGNSQTILEANQKDLDRMDPNDPKYDRLLLSTSRLESIASDIRNVAELPTPVGRILEKRTLPNGLALKKTTVPLGVVGIIYESRPNVTFDVFALCLKSGNATVLKGGSDAMYSNMAIVDLIREVLVRNNVNPDTLYLLPSDREAAGIMLNAVGYIDVIIPRGSQQLIDFARKSSSVPVIETGAGIVHTYFDLSGDLQMGKEIVFNAKTRRPSVCNALDTLLIHRERLDDLASIAEPLAEKKVIIFADKDAYPALLSRYPSELLQKAEEKHFGTEFLSLKMSVKTVDSLEDALKHIARFSSMHSEAVIASDAVVKDEFLKRVDAAVVYANTSTAFTDGAQFGLGAEIGISTQKLHARGPMALQELTSYKWVIEGDGQTRA.

Belongs to the gamma-glutamyl phosphate reductase family.

It is found in the cytoplasm. It carries out the reaction L-glutamate 5-semialdehyde + phosphate + NADP(+) = L-glutamyl 5-phosphate + NADPH + H(+). Its pathway is amino-acid biosynthesis; L-proline biosynthesis; L-glutamate 5-semialdehyde from L-glutamate: step 2/2. Functionally, catalyzes the NADPH-dependent reduction of L-glutamate 5-phosphate into L-glutamate 5-semialdehyde and phosphate. The product spontaneously undergoes cyclization to form 1-pyrroline-5-carboxylate. The protein is Gamma-glutamyl phosphate reductase of Chlorobium phaeobacteroides (strain BS1).